A 689-amino-acid polypeptide reads, in one-letter code: Putative pentatricopeptide repeat-containing protein At3g15130 (689 aa).

14 PPR repeats span residues 5–39 (QRQN…GSGL), 40–70 (NLIT…MPER), 71–105 (NVVS…GIYP), 106–140 (NEFT…GFEM), 141–171 (MVEV…IVDR), 172–206 (SLIS…NIKE), 209–243 (DEFT…GFHC), 246–276 (SATI…IKEK), 277–311 (TMIS…NSQI), 312–342 (DSFA…AVKL), 347–377 (ETSV…MQLK), 378–412 (DVIS…NIEP), 413–448 (DEVC…GIKP), and 449–479 (RVEH…MPIK). A type E motif region spans residues 484-559 (IWQTLLSLCR…EAGMSWVEIE (76 aa)). A type E(+) motif region spans residues 560 to 590 (REVHFFRSGEDSHPLTPVIQETLKEAERRLR). The tract at residues 592–689 (ELGYVYGLKH…DGCCSCGDYW (98 aa)) is type DYW motif.

Belongs to the PPR family. PCMP-H subfamily.

The polypeptide is Putative pentatricopeptide repeat-containing protein At3g15130 (PCMP-H86) (Arabidopsis thaliana (Mouse-ear cress)).